The following is a 137-amino-acid chain: Actin-depolymerizing factor 2 (137 aa).

The 133-residue stretch at 5–137 (ASGMAVHDDC…GLDVFKSRTN (133 aa)) folds into the ADF-H domain. Position 6 is a phosphoserine (serine 6).

The protein belongs to the actin-binding proteins ADF family. As to quaternary structure, interacts with AIP1-1.

It is found in the cytoplasm. The protein resides in the cytoskeleton. Functionally, actin-depolymerizing protein. Severs actin filaments (F-actin) and binds to actin monomers. Required for normal cell growth, plant development, cell organ expansion and flowering. Essential for root-knot nematode infection. The chain is Actin-depolymerizing factor 2 (ADF2) from Arabidopsis thaliana (Mouse-ear cress).